A 186-amino-acid chain; its full sequence is MSAAEIKTNTDQKMQKSLESLKSSLAKIRSGRANPGILEHIHVDYYGNPTPLSQVASLGLADARTINVQPFEKTMVAAVEKAIRDSDLGLNPASQGTVIRVPMPALTEERRRELTKVVKSEGEDTKIAVRNLRRDANEHLKRLTKDKEISEDEERRATDEIQKMTDKAVVDIDKIIVEKEKEIMTV.

This sequence belongs to the RRF family.

The protein localises to the cytoplasm. Its function is as follows. Responsible for the release of ribosomes from messenger RNA at the termination of protein biosynthesis. May increase the efficiency of translation by recycling ribosomes from one round of translation to another. The protein is Ribosome-recycling factor of Polynucleobacter asymbioticus (strain DSM 18221 / CIP 109841 / QLW-P1DMWA-1) (Polynucleobacter necessarius subsp. asymbioticus).